The chain runs to 453 residues: Na(+)/H(+) antiporter NhaA 2 (453 aa).

12 consecutive transmembrane segments (helical) span residues 23–43 (FLHI…AALI), 74–94 (LHFW…GMEI), 111–131 (LPMA…LSFG), 139–159 (GWAV…ALLG), 168–188 (VFLL…IAFF), 191–211 (GGLD…VIGL), 214–234 (IGVG…LGIL), 235–255 (LTGA…PVTA), 316–336 (VAFG…LSGV), 345–365 (WVMI…IVSV), 386–406 (IVLV…IANL), and 419–439 (LGVL…GVWS).

It belongs to the NhaA Na(+)/H(+) (TC 2.A.33) antiporter family.

The protein resides in the cell inner membrane. The catalysed reaction is Na(+)(in) + 2 H(+)(out) = Na(+)(out) + 2 H(+)(in). Its function is as follows. Na(+)/H(+) antiporter that extrudes sodium in exchange for external protons. In Pseudomonas putida (strain ATCC 700007 / DSM 6899 / JCM 31910 / BCRC 17059 / LMG 24140 / F1), this protein is Na(+)/H(+) antiporter NhaA 2.